Reading from the N-terminus, the 1393-residue chain is DNA-directed RNA polymerase subunit beta' (1393 aa).

Residues cysteine 71, cysteine 73, cysteine 86, and cysteine 89 each coordinate Zn(2+). Mg(2+) contacts are provided by aspartate 462, aspartate 464, and aspartate 466. Residues cysteine 811, cysteine 885, cysteine 892, and cysteine 895 each coordinate Zn(2+).

The protein belongs to the RNA polymerase beta' chain family. The RNAP catalytic core consists of 2 alpha, 1 beta, 1 beta' and 1 omega subunit. When a sigma factor is associated with the core the holoenzyme is formed, which can initiate transcription. It depends on Mg(2+) as a cofactor. Zn(2+) serves as cofactor.

The catalysed reaction is RNA(n) + a ribonucleoside 5'-triphosphate = RNA(n+1) + diphosphate. Its function is as follows. DNA-dependent RNA polymerase catalyzes the transcription of DNA into RNA using the four ribonucleoside triphosphates as substrates. The polypeptide is DNA-directed RNA polymerase subunit beta' (Azorhizobium caulinodans (strain ATCC 43989 / DSM 5975 / JCM 20966 / LMG 6465 / NBRC 14845 / NCIMB 13405 / ORS 571)).